The sequence spans 153 residues: Putative ATP synthase subunit f, mitochondrial (153 aa).

Belongs to the ATPase F chain family. Subunit of the F-type ATPase which has 2 components, CF(1) - the catalytic core - and CF(0) - the membrane proton channel.

The protein localises to the mitochondrion membrane. Mitochondrial membrane ATP synthase (F(1)F(0) ATP synthase or Complex V) produces ATP from ADP in the presence of a proton gradient across the membrane which is generated by electron transport complexes of the respiratory chain. F-type ATPases consist of two structural domains, F(1) - containing the extramembraneous catalytic core and F(0) - containing the membrane proton channel, linked together by a central stalk and a peripheral stalk. During catalysis, ATP synthesis in the catalytic domain of F(1) is coupled via a rotary mechanism of the central stalk subunits to proton translocation. Part of the complex F(0) domain. Minor subunit located with subunit a in the membrane. This chain is Putative ATP synthase subunit f, mitochondrial, found in Caenorhabditis elegans.